We begin with the raw amino-acid sequence, 396 residues long: Elongation factor Tu (396 aa).

In terms of domain architecture, tr-type G spans 10–206 (KPHVNVGTIG…ALDTYIPTPE (197 aa)). Residues 19 to 26 (GHVDHGKT) form a G1 region. 19–26 (GHVDHGKT) is a GTP binding site. Thr-26 provides a ligand contact to Mg(2+). The interval 60–64 (GITIN) is G2. The tract at residues 81–84 (DCPG) is G3. GTP contacts are provided by residues 81–85 (DCPGH) and 136–139 (NKAD). The tract at residues 136 to 139 (NKAD) is G4. Residues 174–176 (SAK) form a G5 region.

Belongs to the TRAFAC class translation factor GTPase superfamily. Classic translation factor GTPase family. EF-Tu/EF-1A subfamily. As to quaternary structure, monomer.

The protein resides in the cytoplasm. It carries out the reaction GTP + H2O = GDP + phosphate + H(+). GTP hydrolase that promotes the GTP-dependent binding of aminoacyl-tRNA to the A-site of ribosomes during protein biosynthesis. This chain is Elongation factor Tu, found in Bordetella avium (strain 197N).